Here is a 468-residue protein sequence, read N- to C-terminus: ATP synthase subunit beta (468 aa).

Position 155–162 (155–162 (GGAGVGKT)) interacts with ATP.

Belongs to the ATPase alpha/beta chains family. In terms of assembly, F-type ATPases have 2 components, CF(1) - the catalytic core - and CF(0) - the membrane proton channel. CF(1) has five subunits: alpha(3), beta(3), gamma(1), delta(1), epsilon(1). CF(0) has three main subunits: a(1), b(2) and c(9-12). The alpha and beta chains form an alternating ring which encloses part of the gamma chain. CF(1) is attached to CF(0) by a central stalk formed by the gamma and epsilon chains, while a peripheral stalk is formed by the delta and b chains.

The protein localises to the cell membrane. The catalysed reaction is ATP + H2O + 4 H(+)(in) = ADP + phosphate + 5 H(+)(out). Functionally, produces ATP from ADP in the presence of a proton gradient across the membrane. The catalytic sites are hosted primarily by the beta subunits. This chain is ATP synthase subunit beta, found in Streptococcus pneumoniae (strain ATCC BAA-255 / R6).